A 241-amino-acid chain; its full sequence is Proteasome subunit beta type-1 (241 aa).

M1 carries the N-acetylmethionine modification. A propeptide spanning residues 1–28 (MLSSVAAYSGAGRDLAMEPHSSVGPLQL) is cleaved from the precursor. Residue S58 is glycosylated (O-linked (GlcNAc) serine). Residues S62 and S68 each carry the phosphoserine modification. Y150 is modified (phosphotyrosine). A Phosphoserine modification is found at S162. K204 bears the N6-acetyllysine mark. O-linked (GlcNAc) serine glycosylation occurs at S209.

Belongs to the peptidase T1B family. The 26S proteasome consists of a 20S proteasome core and two 19S regulatory subunits. The 20S proteasome core is a barrel-shaped complex made of 28 subunits that are arranged in four stacked rings. The two outer rings are each formed by seven alpha subunits, and the two inner rings are formed by seven beta subunits. The proteolytic activity is exerted by three beta-subunits PSMB5, PSMB6 and PSMB7. Interacts with SERPINB2. Interacts with RFPL4A.

It is found in the cytoplasm. It localises to the nucleus. Its function is as follows. Non-catalytic component of the 20S core proteasome complex involved in the proteolytic degradation of most intracellular proteins. This complex plays numerous essential roles within the cell by associating with different regulatory particles. Associated with two 19S regulatory particles, forms the 26S proteasome and thus participates in the ATP-dependent degradation of ubiquitinated proteins. The 26S proteasome plays a key role in the maintenance of protein homeostasis by removing misfolded or damaged proteins that could impair cellular functions, and by removing proteins whose functions are no longer required. Associated with the PA200 or PA28, the 20S proteasome mediates ubiquitin-independent protein degradation. This type of proteolysis is required in several pathways including spermatogenesis (20S-PA200 complex) or generation of a subset of MHC class I-presented antigenic peptides (20S-PA28 complex). The sequence is that of Proteasome subunit beta type-1 (PSMB1) from Bos taurus (Bovine).